A 246-amino-acid polypeptide reads, in one-letter code: 1-(5-phosphoribosyl)-5-[(5-phosphoribosylamino)methylideneamino] imidazole-4-carboxamide isomerase (246 aa).

The Proton acceptor role is filled by aspartate 8. Aspartate 131 acts as the Proton donor in catalysis.

Belongs to the HisA/HisF family.

Its subcellular location is the cytoplasm. It catalyses the reaction 1-(5-phospho-beta-D-ribosyl)-5-[(5-phospho-beta-D-ribosylamino)methylideneamino]imidazole-4-carboxamide = 5-[(5-phospho-1-deoxy-D-ribulos-1-ylimino)methylamino]-1-(5-phospho-beta-D-ribosyl)imidazole-4-carboxamide. It participates in amino-acid biosynthesis; L-histidine biosynthesis; L-histidine from 5-phospho-alpha-D-ribose 1-diphosphate: step 4/9. The polypeptide is 1-(5-phosphoribosyl)-5-[(5-phosphoribosylamino)methylideneamino] imidazole-4-carboxamide isomerase (Polaromonas naphthalenivorans (strain CJ2)).